The following is a 549-amino-acid chain: Undecaprenyl phosphate-alpha-4-amino-4-deoxy-L-arabinose arabinosyl transferase (549 aa).

12 helical membrane-spanning segments follow: residues 9–29 (LLLI…GLWI), 80–100 (LFGV…LAYL), 112–132 (SLAC…SGYA), 136–156 (PQFT…LDAG), 176–196 (FLTK…PYML), 204–224 (LLGY…PWAL), 256–276 (PWWF…GLLP), 288–308 (QAPV…FSLS), 312–332 (LPTY…HALV), 346–366 (NGLL…YLQL), 376–396 (FELF…LAQW), and 402–422 (AWAA…AAMP).

This sequence belongs to the glycosyltransferase 83 family.

It localises to the cell inner membrane. It catalyses the reaction 4-amino-4-deoxy-alpha-L-arabinopyranosyl di-trans,octa-cis-undecaprenyl phosphate + lipid IVA = lipid IIA + di-trans,octa-cis-undecaprenyl phosphate.. The protein operates within lipopolysaccharide metabolism; 4-amino-4-deoxy-beta-L-arabinose-lipid A biosynthesis. In terms of biological role, catalyzes the transfer of the L-Ara4N moiety of the glycolipid undecaprenyl phosphate-alpha-L-Ara4N to lipid A. The modified arabinose is attached to lipid A and is required for resistance to polymyxin and cationic antimicrobial peptides. This Pseudomonas aeruginosa (strain ATCC 15692 / DSM 22644 / CIP 104116 / JCM 14847 / LMG 12228 / 1C / PRS 101 / PAO1) protein is Undecaprenyl phosphate-alpha-4-amino-4-deoxy-L-arabinose arabinosyl transferase.